The chain runs to 383 residues: Ceramide synthase 3 (383 aa).

Residues Val32–Val52 traverse the membrane as a helical segment. Residues Asn66–Cys127 are homeobox-like. The TLC domain maps to Gln130 to Phe331. A run of 5 helical transmembrane segments spans residues Phe139–Ala159, Leu174–Phe194, Phe205–Ala225, Leu263–Ile283, and Ile302–Ile322. Topologically, residues Leu323–Arg383 are cytoplasmic. Ser340 is subject to Phosphoserine. The segment at Ser340 to Arg383 is disordered. The span at Asn342–Ala354 shows a compositional bias: acidic residues. The span at Glu355–Tyr364 shows a compositional bias: basic and acidic residues.

In terms of tissue distribution, predominantly expressed in testis. In skin, present in the upper stratum spinosum and stratum granulosum (at protein level).

It localises to the endoplasmic reticulum membrane. The enzyme catalyses a very long-chain fatty acyl-CoA + a sphingoid base = an N-(very-long-chain fatty acyl)-sphingoid base + CoA + H(+). The catalysed reaction is docosanoyl-CoA + sphinganine = N-docosanoylsphinganine + CoA + H(+). It catalyses the reaction tetracosanoyl-CoA + sphinganine = N-tetracosanoylsphinganine + CoA + H(+). It carries out the reaction hexacosanoyl-CoA + sphinganine = N-hexacosanoylsphinganine + CoA + H(+). The enzyme catalyses 2-hydroxydocosanoyl-CoA + sphinganine = N-(2-hydroxydocosanoyl)-sphinganine + CoA + H(+). The catalysed reaction is 2-hydroxytetracosanoyl-CoA + sphinganine = N-(2-hydroxytetracosanoyl)-sphinganine + CoA + H(+). It catalyses the reaction an ultra-long-chain fatty acyl-CoA + a sphingoid base = an N-(ultra-long-chain-acyl)-sphingoid base + CoA + H(+). It carries out the reaction octacosanoyl-CoA + sphinganine = N-(octacosanoyl)-sphinganine + CoA + H(+). The enzyme catalyses a fatty acyl-CoA + sphing-4-enine = an N-acylsphing-4-enine + CoA + H(+). The catalysed reaction is sphinganine + octadecanoyl-CoA = N-(octadecanoyl)-sphinganine + CoA + H(+). It catalyses the reaction 2-hydroxyoctadecanoyl-CoA + sphinganine = N-(2-hydroxyoctadecanoyl)-sphinganine + CoA + H(+). It participates in lipid metabolism; sphingolipid metabolism. Functionally, ceramide synthase that catalyzes the transfer of the acyl chain from acyl-CoA to a sphingoid base, with high selectivity toward very- and ultra-long-chain fatty acyl-CoA (chain length greater than C22). N-acylates sphinganine and sphingosine bases to form dihydroceramides and ceramides in de novo synthesis and salvage pathways, respectively. It is crucial for the synthesis of ultra-long-chain ceramides in the epidermis, to maintain epidermal lipid homeostasis and terminal differentiation. The sequence is that of Ceramide synthase 3 from Mus musculus (Mouse).